The chain runs to 283 residues: Undecaprenyl-diphosphatase (283 aa).

8 consecutive transmembrane segments (helical) span residues 4–24 (LLIL…FLPI), 45–65 (ADLF…YEYW), 91–111 (QLGL…FTLA), 118–138 (LFNP…IFYV), 153–173 (VSLK…IPGT), 194–214 (AEFS…LDLL), 228–248 (ILGV…RWLV), and 258–278 (IFAW…WIFG).

This sequence belongs to the UppP family.

Its subcellular location is the cell inner membrane. It catalyses the reaction di-trans,octa-cis-undecaprenyl diphosphate + H2O = di-trans,octa-cis-undecaprenyl phosphate + phosphate + H(+). In terms of biological role, catalyzes the dephosphorylation of undecaprenyl diphosphate (UPP). Confers resistance to bacitracin. The polypeptide is Undecaprenyl-diphosphatase (Psychrobacter sp. (strain PRwf-1)).